The chain runs to 211 residues: Large ribosomal subunit protein eL13 (211 aa).

Lys16 carries the N6-acetyllysine modification. Ser52, Ser77, and Ser106 each carry phosphoserine. Glycyl lysine isopeptide (Lys-Gly) (interchain with G-Cter in SUMO2) cross-links involve residues Lys123 and Lys145. Lys174 is covalently cross-linked (Glycyl lysine isopeptide (Lys-Gly) (interchain with G-Cter in SUMO1); alternate). Glycyl lysine isopeptide (Lys-Gly) (interchain with G-Cter in SUMO2); alternate cross-links involve residues Lys174 and Lys177. N6-acetyllysine; alternate is present on Lys177.

This sequence belongs to the eukaryotic ribosomal protein eL13 family. Component of the 60S large ribosomal subunit (LSU).

The protein localises to the cytoplasm. Functionally, component of the ribosome, a large ribonucleoprotein complex responsible for the synthesis of proteins in the cell. The small ribosomal subunit (SSU) binds messenger RNAs (mRNAs) and translates the encoded message by selecting cognate aminoacyl-transfer RNA (tRNA) molecules. The large subunit (LSU) contains the ribosomal catalytic site termed the peptidyl transferase center (PTC), which catalyzes the formation of peptide bonds, thereby polymerizing the amino acids delivered by tRNAs into a polypeptide chain. The nascent polypeptides leave the ribosome through a tunnel in the LSU and interact with protein factors that function in enzymatic processing, targeting, and the membrane insertion of nascent chains at the exit of the ribosomal tunnel. As part of the LSU, it is probably required for its formation and the maturation of rRNAs. Plays a role in bone development. This Rattus norvegicus (Rat) protein is Large ribosomal subunit protein eL13 (Rpl13).